The primary structure comprises 266 residues: Tryptophan synthase alpha chain (266 aa).

Active-site proton acceptor residues include Glu-49 and Asp-60.

It belongs to the TrpA family. As to quaternary structure, tetramer of two alpha and two beta chains.

It carries out the reaction (1S,2R)-1-C-(indol-3-yl)glycerol 3-phosphate + L-serine = D-glyceraldehyde 3-phosphate + L-tryptophan + H2O. The protein operates within amino-acid biosynthesis; L-tryptophan biosynthesis; L-tryptophan from chorismate: step 5/5. Functionally, the alpha subunit is responsible for the aldol cleavage of indoleglycerol phosphate to indole and glyceraldehyde 3-phosphate. The polypeptide is Tryptophan synthase alpha chain (Chloroflexus aurantiacus (strain ATCC 29364 / DSM 637 / Y-400-fl)).